Reading from the N-terminus, the 167-residue chain is Translationally-controlled tumor protein homolog (167 aa).

The region spanning 1–167 (MIIYKDIFSG…WKHGIDEEKI (167 aa)) is the TCTP domain.

This sequence belongs to the TCTP family.

It is found in the cytoplasm. It localises to the cytoskeleton. Functionally, involved in protein synthesis. Involved in microtubule stabilization. The polypeptide is Translationally-controlled tumor protein homolog (Candida glabrata (strain ATCC 2001 / BCRC 20586 / JCM 3761 / NBRC 0622 / NRRL Y-65 / CBS 138) (Yeast)).